The following is a 380-amino-acid chain: MTIMRKKHPLLKMINHSFIDLPTPSNISSWWNFGSLLGVCLIIQILTGLFLAMHYTSDTTTAFSSVAHICRDVNYGWLIRYLHANGASMFFICLFIHVGRGIYYGSYMLLETWNIGIVLLLTTMATAFVGYVLPWGQMSFWGATVITNLLSAIPYIGNTLVEWIWGGFSVDKATLTRFFAFHFILPFIITALVLVHLLFLHETGSNNPSGLNSNSDKIPFHPYYTIKDLLGVLLLLMVLTILVLFFPDALGDPDNYTPANPLNTPAHXXXXXXXXXXXXXXXXIPNKLGGVXALXLSILILXXXPLLNSSKQHGLMYRPITQVLYWIFXXNLXXXXXXXXXXXXXXXXXXXQIASICYXAIIIIFMPXASMIENSMLKLH.

Transmembrane regions (helical) follow at residues 33-53 (FGSL…FLAM), 77-98 (WLIR…FIHV), 113-133 (WNIG…GYVL), and 178-198 (FFAF…VHLL). 2 residues coordinate heme b: His-83 and His-97. Heme b-binding residues include His-182 and His-196. His-201 lines the a ubiquinone pocket. Helical transmembrane passes span 226–246 (IKDL…VLFF), 288–308 (LGGV…PLLN), 320–340 (ITQV…XXXX), and 347–367 (XXXX…IFMP).

This sequence belongs to the cytochrome b family. As to quaternary structure, the cytochrome bc1 complex contains 11 subunits: 3 respiratory subunits (MT-CYB, CYC1 and UQCRFS1), 2 core proteins (UQCRC1 and UQCRC2) and 6 low-molecular weight proteins (UQCRH/QCR6, UQCRB/QCR7, UQCRQ/QCR8, UQCR10/QCR9, UQCR11/QCR10 and a cleavage product of UQCRFS1). This cytochrome bc1 complex then forms a dimer. Heme b is required as a cofactor.

It localises to the mitochondrion inner membrane. In terms of biological role, component of the ubiquinol-cytochrome c reductase complex (complex III or cytochrome b-c1 complex) that is part of the mitochondrial respiratory chain. The b-c1 complex mediates electron transfer from ubiquinol to cytochrome c. Contributes to the generation of a proton gradient across the mitochondrial membrane that is then used for ATP synthesis. The polypeptide is Cytochrome b (MT-CYB) (Rhipidomys leucodactylus (White-footed climbing mouse)).